We begin with the raw amino-acid sequence, 184 residues long: ATP-dependent protease subunit HslV (184 aa).

T8 is a catalytic residue. Positions 165, 168, and 171 each coordinate Na(+).

Belongs to the peptidase T1B family. HslV subfamily. As to quaternary structure, a double ring-shaped homohexamer of HslV is capped on each side by a ring-shaped HslU homohexamer. The assembly of the HslU/HslV complex is dependent on binding of ATP.

The protein localises to the cytoplasm. It catalyses the reaction ATP-dependent cleavage of peptide bonds with broad specificity.. With respect to regulation, allosterically activated by HslU binding. Its function is as follows. Protease subunit of a proteasome-like degradation complex believed to be a general protein degrading machinery. This chain is ATP-dependent protease subunit HslV, found in Pediococcus pentosaceus (strain ATCC 25745 / CCUG 21536 / LMG 10740 / 183-1w).